The following is a 107-amino-acid chain: Translation initiation factor IF-1, chloroplastic (107 aa).

Residues 8 to 83 (REKKNPREAK…SKGRIIYRLP (76 aa)) enclose the S1-like domain. The segment at 81–107 (RLPHKDSKRTEDSKDTEDLKDTKDSKD) is disordered. Basic and acidic residues predominate over residues 83-107 (PHKDSKRTEDSKDTEDLKDTKDSKD).

It belongs to the IF-1 family. Component of the 30S ribosomal translation pre-initiation complex which assembles on the 30S ribosome in the order IF-2 and IF-3, IF-1 and N-formylmethionyl-tRNA(fMet); mRNA recruitment can occur at any time during PIC assembly.

It localises to the plastid. It is found in the chloroplast. Functionally, one of the essential components for the initiation of protein synthesis. Stabilizes the binding of IF-2 and IF-3 on the 30S subunit to which N-formylmethionyl-tRNA(fMet) subsequently binds. Helps modulate mRNA selection, yielding the 30S pre-initiation complex (PIC). Upon addition of the 50S ribosomal subunit IF-1, IF-2 and IF-3 are released leaving the mature 70S translation initiation complex. In Saccharum hybrid (Sugarcane), this protein is Translation initiation factor IF-1, chloroplastic.